A 358-amino-acid chain; its full sequence is Heat-inducible transcription repressor HrcA (358 aa).

It belongs to the HrcA family.

Functionally, negative regulator of class I heat shock genes (grpE-dnaK-dnaJ and groELS operons). Prevents heat-shock induction of these operons. In Caulobacter vibrioides (strain ATCC 19089 / CIP 103742 / CB 15) (Caulobacter crescentus), this protein is Heat-inducible transcription repressor HrcA.